A 613-amino-acid chain; its full sequence is Ectonucleoside triphosphate diphosphohydrolase 4 (613 aa).

The Cytoplasmic portion of the chain corresponds to 1–33; that stretch reads MGRIGISCLFPASWHFSISPVGCPRILNTNLRQ. The chain crosses the membrane as a helical span at residues 34–54; sequence IVVISILAAAVSLLYFSVVII. Residues 55-559 lie on the Lumenal side of the membrane; that stretch reads RSKYGWLSKD…AGHAHWRGVS (505 aa). Glu-222 acts as the Proton acceptor in catalysis. The cysteines at positions 368 and 395 are disulfide-linked. Residues Asn-404 and Asn-407 are each glycosylated (N-linked (GlcNAc...) asparagine). A disulfide bridge links Cys-461 with Cys-490. A helical membrane pass occupies residues 560-580; the sequence is FVYNHYLFSGCFLVVLLSILL. Topologically, residues 581-613 are cytoplasmic; it reads YLLRLRRIHRRAPRTGSLWMEEGLPSQKGPGPL.

It belongs to the GDA1/CD39 NTPase family. Ca(2+) is required as a cofactor. Mg(2+) serves as cofactor. Ubiquitous.

It localises to the cytoplasmic vesicle. The protein localises to the autophagosome membrane. The protein resides in the lysosome membrane. It is found in the golgi apparatus membrane. It catalyses the reaction a ribonucleoside 5'-triphosphate + H2O = a ribonucleoside 5'-diphosphate + phosphate + H(+). It carries out the reaction a ribonucleoside 5'-diphosphate + H2O = a ribonucleoside 5'-phosphate + phosphate + H(+). The enzyme catalyses UDP + H2O = UMP + phosphate + H(+). The catalysed reaction is UTP + H2O = UDP + phosphate + H(+). It catalyses the reaction CTP + H2O = CDP + phosphate + H(+). It carries out the reaction GDP + H2O = GMP + phosphate + H(+). The enzyme catalyses 5-methyl-UTP + H2O = 5-methyl-UDP + phosphate + H(+). Its function is as follows. Catalyzes the hydrolysis of nucleoside triphosphates and diphosphates in a calcium- or magnesium-dependent manner, with a preference for pyrimidines. Preferentially hydrolyzes UTP and TTP on UTP and TTP. AMP, ADP, ATP and UMP are not substrates. Preferentially activated by Ca(2+) over Mg(2+). Has a broad substrate specificity with the ability of cleaving all nucleotide di- and triphosphates with the exception of adenosine di- and triphosphate (ADP and ATP). Preferentially hydrolyzes CTP, UDP, CDP, GTP and GDP. Can use either Ca(2+) or Mg(2+) equally. This is Ectonucleoside triphosphate diphosphohydrolase 4 (Entpd4) from Mus musculus (Mouse).